We begin with the raw amino-acid sequence, 37 residues long: MKVRASVKRICRNCKIIKRSGTIRVICKDARHKQKQG.

Belongs to the bacterial ribosomal protein bL36 family.

This chain is Large ribosomal subunit protein bL36, found in Legionella pneumophila subsp. pneumophila (strain Philadelphia 1 / ATCC 33152 / DSM 7513).